A 4151-amino-acid chain; its full sequence is Mycoketide-CoA synthase (4151 aa).

Residues 2–32 adopt a coiled-coil conformation; the sequence is VDQLQHATEALRKALVQVERLKRTNRALLER. The 424-residue stretch at 34–457 folds into the Ketosynthase family 3 (KS3) 1 domain; the sequence is SEPIAIVGMS…GTNAHVIIEA (424 aa). Module regions lie at residues 35 to 2038 and 2057 to 4070; these read EPIA…RTEL and DPIA…RREL. The active-site Acyl-thioester intermediate; for beta-ketoacyl synthase 1 activity is the Cys-203. Active-site for beta-ketoacyl synthase 1 activity residues include His-338 and His-379. The interval 559–880 is acyltransferase 1; it reads VFVFPGQGSQ…AASAFVAGVA (322 aa). Catalysis depends on Ser-650, which acts as the Acyl-ester intermediate; for acyltransferase 1 activity. Residues 926–1048 are N-terminal hotdog fold 1; sequence HPLLGAVVDL…GILRPGSVEP (123 aa). Residues 926-1194 form a dehydratase 1 region; sequence HPLLGAVVDL…VARPVTERQL (269 aa). Residues 926 to 1195 enclose the PKS/mFAS DH 1 domain; that stretch reads HPLLGAVVDL…ARPVTERQLL (270 aa). His-958 acts as the Proton acceptor; for dehydratase activity 1 in catalysis. The interval 1060-1195 is C-terminal hotdog fold 1; it reads AVTVDVADGY…ARPVTERQLL (136 aa). The active-site Proton donor; for dehydratase activity 1 is the Asp-1120. Positions 1366 to 1671 are enoyl reductase 1; the sequence is GTFENLRLEP…QARHTGKVVM (306 aa). Residues 1680 to 1858 are beta-ketoacyl reductase 1; sequence GTVLITGGTG…AISLGWGLWD (179 aa). The For beta-ketoacyl reductase 1 activity role is filled by Tyr-1828. The region spanning 1963–2038 is the Carrier 1 domain; sequence AVLLGLVRLH…RLASYIRTEL (76 aa). Ser-1998 is modified (O-(pantetheine 4'-phosphoryl)serine). The Ketosynthase family 3 (KS3) 2 domain maps to 2056–2480; the sequence is EDPIAIVGMA…GTNAHVIIEA (425 aa). Residue Cys-2226 is the Acyl-thioester intermediate; for beta-ketoacyl synthase 2 activity of the active site. Catalysis depends on for beta-ketoacyl synthase 2 activity residues His-2361 and His-2402. The tract at residues 2582 to 2893 is acyltransferase 2; the sequence is VFVFPGQGSQ…AVAQGFVTGM (312 aa). The active-site Acyl-ester intermediate; for acyltransferase 2 activity is the Ser-2672. An N-terminal hotdog fold 2 region spans residues 2940 to 3062; the sequence is HALLGAVIDL…GALRAGSAEP (123 aa). The segment at 2940–3215 is dehydratase 2; it reads HALLGAVIDL…ARPVTDQQLR (276 aa). The 276-residue stretch at 2940–3215 folds into the PKS/mFAS DH 2 domain; it reads HALLGAVIDL…ARPVTDQQLR (276 aa). Catalysis depends on His-2972, which acts as the Proton acceptor; for dehydratase activity 2. The segment at 3074 to 3215 is C-terminal hotdog fold 2; that stretch reads AVPVEVADGY…ARPVTDQQLR (142 aa). Asp-3135 functions as the Proton donor; for dehydratase activity 2 in the catalytic mechanism. The tract at residues 3395–3701 is enoyl reductase 2; sequence GTFENLRLEL…QARHTGKVVM (307 aa). The interval 3710-3888 is beta-ketoacyl reductase 2; that stretch reads GTVLITGGTG…AISLGWGLWD (179 aa). Tyr-3858 (for beta-ketoacyl reductase 2 activity) is an active-site residue. The 76-residue stretch at 3995–4070 folds into the Carrier 2 domain; sequence AVLLDLVRSH…ALAGYMRREL (76 aa). Ser-4030 carries the post-translational modification O-(pantetheine 4'-phosphoryl)serine.

As to quaternary structure, forms a large supramolecular assembly mediated through specific interactions between the N- and C-terminus linkers.

The enzyme catalyses a medium-chain fatty acyl-CoA + 5 (S)-methylmalonyl-CoA + 5 malonyl-CoA + 22 NADPH + 32 H(+) = a mycoketide-CoA + 10 CO2 + 22 NADP(+) + 10 CoA + 11 H2O. It functions in the pathway lipid metabolism; fatty acid metabolism. Involved in the synthesis of beta-D-mannosyl phosphomycoketide (MPM), an antigenic mycobacterial polyketide. Binds a fatty acyl-CoA as a starter unit, and extends it by five rounds of alternative additions of malonyl-CoA and methylmalonyl-CoA extender units. Depending on the starter unit, the enzyme forms mycoketide-CoAs of different lengths. Shows preference for small-/medium-chain starter fatty acyl substrates. Uses a hybrid modularly iterative mechanism, by forming a supramolecular assembly to perform repetitive cycles of iterations. The sequence is that of Mycoketide-CoA synthase from Mycobacterium tuberculosis (strain ATCC 25618 / H37Rv).